Here is a 172-residue protein sequence, read N- to C-terminus: Water stress-inducible protein Rab21 (172 aa).

A disordered region spans residues 1 to 172; the sequence is MEHQGQHGHV…KIKEKLPGQH (172 aa). The Type A repeat unit spans residues 3-28; the sequence is HQGQHGHVTSRVDEYGNPVGTGAGHG. Over residues 21–65 the composition is skewed to gly residues; sequence VGTGAGHGQMGTAGMGTHGTTGGMGTHGTTGGMGTHGTTGTGGGQ. Residues 98–115 form a Type B repeat; the sequence is RRKKGIKEKIKEKLPGGN. Gly residues predominate over residues 124–139; sequence GGTGGAYGQQGHGTGM. The stretch at 125 to 149 is one Type A repeat; it reads GTGGAYGQQGHGTGMTTGTTGAHGT. The segment covering 140–153 has biased composition (low complexity); it reads TTGTTGAHGTTTTD. Over residues 154 to 172 the composition is skewed to basic and acidic residues; the sequence is TGEKKGIMDKIKEKLPGQH. The stretch at 156 to 172 is one Type B repeat; the sequence is EKKGIMDKIKEKLPGQH.

Belongs to the plant dehydrin family.

It localises to the cytoplasm. In Oryza sativa subsp. indica (Rice), this protein is Water stress-inducible protein Rab21 (RAB21).